Here is a 289-residue protein sequence, read N- to C-terminus: Ribosomal RNA small subunit methyltransferase A (289 aa).

S-adenosyl-L-methionine is bound by residues His-27, Leu-29, Gly-54, Glu-76, Asp-102, and Asn-123.

The protein belongs to the class I-like SAM-binding methyltransferase superfamily. rRNA adenine N(6)-methyltransferase family. RsmA subfamily.

It is found in the cytoplasm. It catalyses the reaction adenosine(1518)/adenosine(1519) in 16S rRNA + 4 S-adenosyl-L-methionine = N(6)-dimethyladenosine(1518)/N(6)-dimethyladenosine(1519) in 16S rRNA + 4 S-adenosyl-L-homocysteine + 4 H(+). Functionally, specifically dimethylates two adjacent adenosines (A1518 and A1519) in the loop of a conserved hairpin near the 3'-end of 16S rRNA in the 30S particle. May play a critical role in biogenesis of 30S subunits. The chain is Ribosomal RNA small subunit methyltransferase A from Maricaulis maris (strain MCS10) (Caulobacter maris).